The following is a 175-amino-acid chain: DPY30 domain-containing protein 1 (175 aa).

A compositionally biased stretch (basic and acidic residues) spans 94 to 112; the sequence is QQKEKQKSEDFETGQEKSF. Disordered stretches follow at residues 94 to 134 and 152 to 175; these read QQKE…QAEE and APNL…SAPP.

Belongs to the dpy-30 family. As to quaternary structure, component of the axonemal radial spoke complex 1 (RS1), at least composed of spoke head proteins RSPH1, RSPH3, RSPH9 and the cilia-specific component RSPH4A or sperm-specific component RSPH6A, spoke stalk proteins RSPH14, DNAJB13, DYDC1, ROPN1L and NME5, and the anchor protein IQUB. Interacts with SH3GL3.

The protein resides in the cytoplasm. It localises to the cytoskeleton. The protein localises to the flagellum axoneme. In terms of biological role, functions as part of axonemal radial spoke complexes that play an important part in the motility of sperm and cilia. Plays a crucial role during acrosome biogenesis. This chain is DPY30 domain-containing protein 1 (Dydc1), found in Mus musculus (Mouse).